The chain runs to 225 residues: Probable methylthioribulose-1-phosphate dehydratase (225 aa).

Cysteine 86 is a binding site for substrate. The Zn(2+) site is built by histidine 104 and histidine 106. Catalysis depends on glutamate 127, which acts as the Proton donor/acceptor. Position 183 (histidine 183) interacts with Zn(2+).

Belongs to the aldolase class II family. MtnB subfamily. It depends on Zn(2+) as a cofactor.

The protein resides in the cytoplasm. It catalyses the reaction 5-(methylsulfanyl)-D-ribulose 1-phosphate = 5-methylsulfanyl-2,3-dioxopentyl phosphate + H2O. It participates in amino-acid biosynthesis; L-methionine biosynthesis via salvage pathway; L-methionine from S-methyl-5-thio-alpha-D-ribose 1-phosphate: step 2/6. Its function is as follows. Catalyzes the dehydration of methylthioribulose-1-phosphate (MTRu-1-P) into 2,3-diketo-5-methylthiopentyl-1-phosphate (DK-MTP-1-P). This chain is Probable methylthioribulose-1-phosphate dehydratase, found in Leishmania infantum.